A 348-amino-acid chain; its full sequence is Anthranilate phosphoribosyltransferase (348 aa).

Residues G80, 83–84 (GD), T88, 90–93 (NVST), 108–116 (KHGNRSVSS), and S120 contribute to the 5-phospho-alpha-D-ribose 1-diphosphate site. Residue G80 participates in anthranilate binding. S92 contributes to the Mg(2+) binding site. N111 is an anthranilate binding site. R166 is a binding site for anthranilate. Mg(2+) contacts are provided by D224 and E225.

It belongs to the anthranilate phosphoribosyltransferase family. In terms of assembly, homodimer. It depends on Mg(2+) as a cofactor.

The enzyme catalyses N-(5-phospho-beta-D-ribosyl)anthranilate + diphosphate = 5-phospho-alpha-D-ribose 1-diphosphate + anthranilate. It functions in the pathway amino-acid biosynthesis; L-tryptophan biosynthesis; L-tryptophan from chorismate: step 2/5. In terms of biological role, catalyzes the transfer of the phosphoribosyl group of 5-phosphorylribose-1-pyrophosphate (PRPP) to anthranilate to yield N-(5'-phosphoribosyl)-anthranilate (PRA). The polypeptide is Anthranilate phosphoribosyltransferase (Sorangium cellulosum (strain So ce56) (Polyangium cellulosum (strain So ce56))).